The chain runs to 500 residues: Inner membrane transporter YjeM (500 aa).

The Cytoplasmic segment spans residues 1–7 (MPHTIKK). The helical transmembrane segment at 8–28 (MSLIGLILMIFTSVFGFANSP) threads the bilayer. Over 29 to 37 (SAYYLMGYS) the chain is Periplasmic. A helical membrane pass occupies residues 38–58 (AIPFYIFSALLFFIPFALMMA). At 59 to 82 (EMGAAYRKEEGGIYSWMNNSVGPR) the chain is on the cytoplasmic side. The chain crosses the membrane as a helical span at residues 83-103 (FAFIGTFMWFSSYIIWMVSTS). The Periplasmic portion of the chain corresponds to 104 to 132 (AKVWVPFSTFLYGSDMTQHWRIAGLEPTQ). Residues 133 to 153 (VVGLLAVAWMILVTVVASKGI) traverse the membrane as a helical segment. Over 154 to 163 (NKIARITAVG) the chain is Cytoplasmic. A helical membrane pass occupies residues 164–184 (GIAVMCLNLVLLLVSITILLL). Residues 185–209 (NGGHFAQDINFLASPNPGYQSGLAM) are Periplasmic-facing. The helical transmembrane segment at 210 to 230 (LSFVVFAIFAYGGIEAVGGLV) threads the bilayer. At 231 to 243 (DKTENPEKNFAKG) the chain is on the cytoplasmic side. A helical transmembrane segment spans residues 244–264 (IVFAAIVISIGYSLAIFLWGV). The Periplasmic segment spans residues 265-319 (STNWQQVLSNGSVNLGNITYVLMKSLGMTLGNALHLSPEASLSLGVWFARITGLS). A helical transmembrane segment spans residues 320 to 340 (MFLAYTGAFFTLCYSPLKAII). The Cytoplasmic segment spans residues 341–369 (QGTPKALWPEPMTRLNAMGMPSIAMWMQC). A helical transmembrane segment spans residues 370-390 (GLVTVFILLVSFGGGTASAFF). Topologically, residues 391–394 (NKLT) are periplasmic. A helical transmembrane segment spans residues 395-415 (LMANVSMTLPYLFLALAFPFF). The Cytoplasmic segment spans residues 416 to 433 (KARQDLDRPFVIFKTHLS). A helical membrane pass occupies residues 434-454 (AMIATVVVVLVVTFANVFTII). The Periplasmic portion of the chain corresponds to 455-462 (QPVVEAGD). The chain crosses the membrane as a helical span at residues 463–483 (WDSTLWMIGGPVFFSLLAMAI). Topologically, residues 484 to 500 (YQNYCSRVAKNPQWAVE) are cytoplasmic.

The protein belongs to the amino acid-polyamine-organocation (APC) superfamily.

The protein resides in the cell inner membrane. The sequence is that of Inner membrane transporter YjeM (yjeM) from Escherichia coli (strain K12).